A 269-amino-acid polypeptide reads, in one-letter code: Indole-3-glycerol phosphate synthase (269 aa).

Belongs to the TrpC family.

The enzyme catalyses 1-(2-carboxyphenylamino)-1-deoxy-D-ribulose 5-phosphate + H(+) = (1S,2R)-1-C-(indol-3-yl)glycerol 3-phosphate + CO2 + H2O. It functions in the pathway amino-acid biosynthesis; L-tryptophan biosynthesis; L-tryptophan from chorismate: step 4/5. The sequence is that of Indole-3-glycerol phosphate synthase from Streptomyces griseus subsp. griseus (strain JCM 4626 / CBS 651.72 / NBRC 13350 / KCC S-0626 / ISP 5235).